The sequence spans 330 residues: DNA-directed RNA polymerase subunit alpha (330 aa).

The tract at residues 1-236 (MQGSVTEFLK…EQLDAFVDLR (236 aa)) is alpha N-terminal domain (alpha-NTD). The interval 250-330 (FDPILLRPVD…NWPPASIAED (81 aa)) is alpha C-terminal domain (alpha-CTD).

The protein belongs to the RNA polymerase alpha chain family. As to quaternary structure, homodimer. The RNAP catalytic core consists of 2 alpha, 1 beta, 1 beta' and 1 omega subunit. When a sigma factor is associated with the core the holoenzyme is formed, which can initiate transcription.

It catalyses the reaction RNA(n) + a ribonucleoside 5'-triphosphate = RNA(n+1) + diphosphate. DNA-dependent RNA polymerase catalyzes the transcription of DNA into RNA using the four ribonucleoside triphosphates as substrates. The polypeptide is DNA-directed RNA polymerase subunit alpha (Vibrio cholerae serotype O1 (strain ATCC 39315 / El Tor Inaba N16961)).